Here is a 108-residue protein sequence, read N- to C-terminus: Thiosulfate sulfurtransferase GlpE (108 aa).

One can recognise a Rhodanese domain in the interval His-17–Ala-105. Cys-65 serves as the catalytic Cysteine persulfide intermediate.

Belongs to the GlpE family.

Its subcellular location is the cytoplasm. The enzyme catalyses thiosulfate + hydrogen cyanide = thiocyanate + sulfite + 2 H(+). It catalyses the reaction thiosulfate + [thioredoxin]-dithiol = [thioredoxin]-disulfide + hydrogen sulfide + sulfite + 2 H(+). In terms of biological role, transferase that catalyzes the transfer of sulfur from thiosulfate to thiophilic acceptors such as cyanide or dithiols. May function in a CysM-independent thiosulfate assimilation pathway by catalyzing the conversion of thiosulfate to sulfite, which can then be used for L-cysteine biosynthesis. This chain is Thiosulfate sulfurtransferase GlpE, found in Citrobacter koseri (strain ATCC BAA-895 / CDC 4225-83 / SGSC4696).